The chain runs to 240 residues: Ribonuclease 3 (240 aa).

One can recognise an RNase III domain in the interval 9 to 141; sequence VEEFQKKTGI…LLAAIYLDQG (133 aa). Glutamate 54 contributes to the Mg(2+) binding site. Aspartate 58 is a catalytic residue. 2 residues coordinate Mg(2+): aspartate 127 and glutamate 130. The active site involves glutamate 130. Positions 168-237 constitute a DRBM domain; sequence DYKTALQEIV…ARIAYEKLLK (70 aa).

It belongs to the ribonuclease III family. As to quaternary structure, homodimer. Mg(2+) serves as cofactor.

It localises to the cytoplasm. The enzyme catalyses Endonucleolytic cleavage to 5'-phosphomonoester.. Digests double-stranded RNA. Involved in the processing of primary rRNA transcript to yield the immediate precursors to the large and small rRNAs (23S and 16S). Processes some mRNAs, and tRNAs when they are encoded in the rRNA operon. Processes pre-crRNA and tracrRNA of type II CRISPR loci if present in the organism. This is Ribonuclease 3 from Thermotoga sp. (strain RQ2).